The chain runs to 189 residues: Large ribosomal subunit protein uL6 (189 aa).

It belongs to the universal ribosomal protein uL6 family. Part of the 50S ribosomal subunit.

This protein binds to the 23S rRNA, and is important in its secondary structure. It is located near the subunit interface in the base of the L7/L12 stalk, and near the tRNA binding site of the peptidyltransferase center. In Bacteroides thetaiotaomicron (strain ATCC 29148 / DSM 2079 / JCM 5827 / CCUG 10774 / NCTC 10582 / VPI-5482 / E50), this protein is Large ribosomal subunit protein uL6.